Here is a 352-residue protein sequence, read N- to C-terminus: Peptide chain release factor 1 (352 aa).

Position 233 is an N5-methylglutamine (glutamine 233). The interval 288–309 (NAKDRKEQVGSGDRSERIRTYN) is disordered. Residues 289–306 (AKDRKEQVGSGDRSERIR) show a composition bias toward basic and acidic residues.

This sequence belongs to the prokaryotic/mitochondrial release factor family. Post-translationally, methylated by PrmC. Methylation increases the termination efficiency of RF1.

The protein resides in the cytoplasm. In terms of biological role, peptide chain release factor 1 directs the termination of translation in response to the peptide chain termination codons UAG and UAA. The polypeptide is Peptide chain release factor 1 (Helicobacter pylori (strain G27)).